We begin with the raw amino-acid sequence, 21 residues long: Sarafotoxin-D (21 aa).

2 disulfide bridges follow: cysteine 1–cysteine 15 and cysteine 3–cysteine 11.

The protein belongs to the endothelin/sarafotoxin family. Expressed by the venom gland.

The protein resides in the secreted. In terms of biological role, vasoconstrictor activity. These toxins cause cardiac arrest probably as a result of coronary vasospasm. May act by displaying agonistic activities towards endothelin-1 and -2 receptors (EDNRA and EDNRB). In Atractaspis engaddensis (Israeli burrowing asp), this protein is Sarafotoxin-D.